The following is a 2531-amino-acid chain: Highly reducing polyketide synthase ausV (2531 aa).

The 426-residue stretch at Ser-7–Thr-432 folds into the Ketosynthase family 3 (KS3) domain. Residues Cys-180, His-315, and His-355 each act as for beta-ketoacyl synthase activity in the active site. A malonyl-CoA:ACP transacylase (MAT) domain region spans residues Phe-554 to Ser-882. The active-site For malonyltransferase activity is Ser-644. Positions His-939–Asp-1069 are N-terminal hotdog fold. Positions His-939–Asp-1238 constitute a PKS/mFAS DH domain. Positions Asp-940 to Ser-1236 are dehydratase (DH) domain. The Proton acceptor; for dehydratase activity role is filled by His-971. The segment at Tyr-1087 to Asp-1238 is C-terminal hotdog fold. Asp-1152 serves as the catalytic Proton donor; for dehydratase activity. The tract at residues Ser-1414 to Ser-1592 is methyltransferase (CMet) domain. Positions Leu-1832–Arg-2133 are enoyl reductase (ER) domain. Positions His-2156–Ile-2331 are ketoreductase (KR) domain. The 78-residue stretch at Ala-2444–Ser-2521 folds into the Carrier domain. Ser-2481 is modified (O-(pantetheine 4'-phosphoryl)serine).

It participates in secondary metabolite biosynthesis; terpenoid biosynthesis. Its function is as follows. Highly reducing polyketide synthase; part of the gene cluster that mediates the biosynthesis of calidodehydroaustin, a fungal meroterpenoid. The first step of the pathway is the synthesis of 3,5-dimethylorsellinic acid by the polyketide synthase ausA. 3,5-dimethylorsellinic acid is then prenylated by the polyprenyl transferase ausN. Further epoxidation by the FAD-dependent monooxygenase ausM and cyclization by the probable terpene cyclase ausL lead to the formation of protoaustinoid A. Protoaustinoid A is then oxidized to spiro-lactone preaustinoid A3 by the combined action of the FAD-binding monooxygenases ausB and ausC, and the dioxygenase ausE. Acid-catalyzed keto-rearrangement and ring contraction of the tetraketide portion of preaustinoid A3 by ausJ lead to the formation of preaustinoid A4. The aldo-keto reductase ausK, with the help of ausH, is involved in the next step by transforming preaustinoid A4 into isoaustinone which is in turn hydroxylated by the P450 monooxygenase ausI to form austinolide. The cytochrome P450 monooxygenase ausG modifies austinolide to austinol. Austinol is further acetylated to austin by the O-acetyltransferase ausP, which spontaneously changes to dehydroaustin. The cytochrome P450 monooxygenase ausR then converts dehydroaustin is into 7-dehydrodehydroaustin. The hydroxylation catalyzed by ausR permits the O-acetyltransferase ausQ to add an additional acetyl group to the molecule, leading to the formation of acetoxydehydroaustin. The short chain dehydrogenase ausT catalyzes the reduction of the double bond present between carbon atoms 1 and 2 to convert 7-dehydrodehydroaustin into 1,2-dihydro-7-hydroxydehydroaustin. AusQ catalyzes not only an acetylation reaction but also the addition of the PKS ausV diketide product to 1,2-dihydro-7-hydroxydehydroaustin, forming precalidodehydroaustin. Finally, the iron/alpha-ketoglutarate-dependent dioxygenase converts precalidodehydroaustin into calidodehydroaustin. This Aspergillus calidoustus protein is Highly reducing polyketide synthase ausV.